The following is a 128-amino-acid chain: Cytochrome c' (128 aa).

Heme c-binding residues include Gln13, Gln17, Glu69, Thr70, Cys118, Cys121, and His122.

Post-translationally, binds 1 heme c group covalently per subunit.

Cytochrome c' is the most widely occurring bacterial c-type cytochrome. Cytochromes c' are high-spin proteins and the heme has no sixth ligand. Their exact function is not known. The protein is Cytochrome c' of Magnetospirillum fulvum (Rhodospirillum fulvum).